The chain runs to 483 residues: Altronate oxidoreductase (483 aa).

18 to 29 (IIQFGEGNFLRA) contributes to the NAD(+) binding site.

It belongs to the mannitol dehydrogenase family. UxaB subfamily.

The catalysed reaction is D-altronate + NAD(+) = keto-D-tagaturonate + NADH + H(+). It participates in carbohydrate metabolism; pentose and glucuronate interconversion. The sequence is that of Altronate oxidoreductase from Klebsiella pneumoniae subsp. pneumoniae (strain ATCC 700721 / MGH 78578).